We begin with the raw amino-acid sequence, 270 residues long: tRNA pseudouridine synthase A (270 aa).

Asp60 acts as the Nucleophile in catalysis. Residues 107 to 111 are RNA binding; sequence FHARF. Tyr118 is a substrate binding site. Positions 168 to 172 are interaction with tRNA; the sequence is QCQSR.

The protein belongs to the tRNA pseudouridine synthase TruA family. Homodimer.

The catalysed reaction is uridine(38/39/40) in tRNA = pseudouridine(38/39/40) in tRNA. In terms of biological role, formation of pseudouridine at positions 38, 39 and 40 in the anticodon stem and loop of transfer RNAs. The protein is tRNA pseudouridine synthase A of Klebsiella pneumoniae subsp. pneumoniae (strain ATCC 700721 / MGH 78578).